The following is a 225-amino-acid chain: UPF0758 protein MADE_1000235 (225 aa).

An MPN domain is found at 102-224; sequence VFNNVDDTKR…TISFAQRGLL (123 aa). 3 residues coordinate Zn(2+): His173, His175, and Asp186. Positions 173 to 186 match the JAMM motif motif; it reads HNHPSGVAEPSHAD.

Belongs to the UPF0758 family.

This Alteromonas mediterranea (strain DSM 17117 / CIP 110805 / LMG 28347 / Deep ecotype) protein is UPF0758 protein MADE_1000235.